Consider the following 192-residue polypeptide: MLITVSGPAGSGKSTLAKSLADALNYEHVSGGDIFRSLAEERGMTPLELNKAAEEDDQIDRDLDRKLRDIAAERDDLVLESRLAGWMAGEYADMKLWLTAPLDVRADRIATRENKPFEQAKTETRERGDSEAQRYSDYYDIDFDDLSIYDLSVNTARWDPQGVLSVTLHAVESYSPDGDEGKAPVENIRYEF.

7–15 serves as a coordination point for ATP; the sequence is GPAGSGKST.

Belongs to the cytidylate kinase family. Type 2 subfamily.

It localises to the cytoplasm. The enzyme catalyses CMP + ATP = CDP + ADP. It carries out the reaction dCMP + ATP = dCDP + ADP. The sequence is that of Cytidylate kinase from Haloarcula marismortui (strain ATCC 43049 / DSM 3752 / JCM 8966 / VKM B-1809) (Halobacterium marismortui).